Consider the following 277-residue polypeptide: 3-methyl-2-oxobutanoate hydroxymethyltransferase (277 aa).

Mg(2+) contacts are provided by Asp-53 and Asp-96. Residues 53-54 (DS), Asp-96, and Lys-126 contribute to the 3-methyl-2-oxobutanoate site. Glu-128 serves as a coordination point for Mg(2+). Residue Glu-195 is the Proton acceptor of the active site.

Belongs to the PanB family. In terms of assembly, homodecamer; pentamer of dimers. It depends on Mg(2+) as a cofactor.

The protein resides in the cytoplasm. The catalysed reaction is 3-methyl-2-oxobutanoate + (6R)-5,10-methylene-5,6,7,8-tetrahydrofolate + H2O = 2-dehydropantoate + (6S)-5,6,7,8-tetrahydrofolate. The protein operates within cofactor biosynthesis; (R)-pantothenate biosynthesis; (R)-pantoate from 3-methyl-2-oxobutanoate: step 1/2. Catalyzes the reversible reaction in which hydroxymethyl group from 5,10-methylenetetrahydrofolate is transferred onto alpha-ketoisovalerate to form ketopantoate. This is 3-methyl-2-oxobutanoate hydroxymethyltransferase from Chlorobaculum parvum (strain DSM 263 / NCIMB 8327) (Chlorobium vibrioforme subsp. thiosulfatophilum).